Consider the following 209-residue polypeptide: Guanylate kinase (209 aa).

Positions 7 to 185 (GNLYIVAAPS…AAMELQSIVI (179 aa)) constitute a Guanylate kinase-like domain. 14-21 (APSGGGKT) contacts ATP.

Belongs to the guanylate kinase family.

The protein resides in the cytoplasm. The catalysed reaction is GMP + ATP = GDP + ADP. Functionally, essential for recycling GMP and indirectly, cGMP. The polypeptide is Guanylate kinase (Legionella pneumophila (strain Paris)).